Here is a 427-residue protein sequence, read N- to C-terminus: Anhydro-N-acetylmuramic acid kinase (427 aa).

ATP is bound at residue 32 to 39 (GTSLDGMD).

It belongs to the anhydro-N-acetylmuramic acid kinase family.

It catalyses the reaction 1,6-anhydro-N-acetyl-beta-muramate + ATP + H2O = N-acetyl-D-muramate 6-phosphate + ADP + H(+). The protein operates within amino-sugar metabolism; 1,6-anhydro-N-acetylmuramate degradation. Its pathway is cell wall biogenesis; peptidoglycan recycling. Catalyzes the specific phosphorylation of 1,6-anhydro-N-acetylmuramic acid (anhMurNAc) with the simultaneous cleavage of the 1,6-anhydro ring, generating MurNAc-6-P. Is required for the utilization of anhMurNAc either imported from the medium or derived from its own cell wall murein, and thus plays a role in cell wall recycling. This is Anhydro-N-acetylmuramic acid kinase from Psychrobacter cryohalolentis (strain ATCC BAA-1226 / DSM 17306 / VKM B-2378 / K5).